We begin with the raw amino-acid sequence, 425 residues long: UDP-N-acetylglucosamine 1-carboxyvinyltransferase (425 aa).

24–25 (KN) contributes to the phosphoenolpyruvate binding site. Arg-95 contacts UDP-N-acetyl-alpha-D-glucosamine. Catalysis depends on Cys-119, which acts as the Proton donor. Cys-119 carries the post-translational modification 2-(S-cysteinyl)pyruvic acid O-phosphothioketal. UDP-N-acetyl-alpha-D-glucosamine contacts are provided by residues 124–128 (RPVDQ), Asp-308, and Val-330.

Belongs to the EPSP synthase family. MurA subfamily.

The protein resides in the cytoplasm. The enzyme catalyses phosphoenolpyruvate + UDP-N-acetyl-alpha-D-glucosamine = UDP-N-acetyl-3-O-(1-carboxyvinyl)-alpha-D-glucosamine + phosphate. It participates in cell wall biogenesis; peptidoglycan biosynthesis. Cell wall formation. Adds enolpyruvyl to UDP-N-acetylglucosamine. The chain is UDP-N-acetylglucosamine 1-carboxyvinyltransferase from Deinococcus deserti (strain DSM 17065 / CIP 109153 / LMG 22923 / VCD115).